A 509-amino-acid polypeptide reads, in one-letter code: Probable cytochrome P450 4ac3 (509 aa).

Cysteine 454 contributes to the heme binding site.

Belongs to the cytochrome P450 family. Heme serves as cofactor.

It localises to the endoplasmic reticulum membrane. It is found in the microsome membrane. May be involved in the metabolism of insect hormones and in the breakdown of synthetic insecticides. The polypeptide is Probable cytochrome P450 4ac3 (Cyp4ac3) (Drosophila melanogaster (Fruit fly)).